The following is a 121-amino-acid chain: MQYLFIFLGGAVGALLRYLLSFINTSFEMPIGTFIANLCGAFLMGFLGTLAIQYFNNSPMLKKGITTGFIGSLTTFSTFQFELVQFFESGSFILLIVYALTSYIFGILLCFLGVRLGAKIS.

A run of 4 helical transmembrane segments spans residues 3 to 23 (YLFI…LSFI), 31 to 51 (IGTF…GTLA), 64 to 84 (GITT…FELV), and 92 to 112 (FILL…LCFL). Na(+)-binding residues include Gly-71 and Thr-74.

Belongs to the fluoride channel Fluc/FEX (TC 1.A.43) family.

The protein localises to the cell membrane. The enzyme catalyses fluoride(in) = fluoride(out). With respect to regulation, na(+) is not transported, but it plays an essential structural role and its presence is essential for fluoride channel function. In terms of biological role, fluoride-specific ion channel. Important for reducing fluoride concentration in the cell, thus reducing its toxicity. The sequence is that of Fluoride-specific ion channel FluC 2 from Staphylococcus saprophyticus subsp. saprophyticus (strain ATCC 15305 / DSM 20229 / NCIMB 8711 / NCTC 7292 / S-41).